The primary structure comprises 457 residues: Phosphatidate cytidylyltransferase (457 aa).

The next 6 helical transmembrane spans lie at 71-91 (VMIS…IVLI), 154-174 (FIVT…FVLF), 188-208 (GSLC…HLII), 214-234 (GLFW…FAYL), 255-275 (GFLG…RILS), and 330-350 (FHAL…GFFA).

Belongs to the CDS family. In terms of assembly, homodimer. It depends on Mg(2+) as a cofactor.

It is found in the endoplasmic reticulum membrane. The protein resides in the cytoplasmic vesicle. Its subcellular location is the secretory vesicle. It carries out the reaction a 1,2-diacyl-sn-glycero-3-phosphate + CTP + H(+) = a CDP-1,2-diacyl-sn-glycerol + diphosphate. It functions in the pathway phospholipid metabolism; CDP-diacylglycerol biosynthesis; CDP-diacylglycerol from sn-glycerol 3-phosphate: step 3/3. Supplies CDP-diacylglycerol, which may play an important role as both a precursor to phosphoinositide biosynthesis in the plasma membrane and as a negative effector of phosphatidylinositol 4-kinase activity, thereby exerting an effect on cell proliferation via a lipid-dependent signal transduction cascade. The chain is Phosphatidate cytidylyltransferase (CDS1) from Saccharomyces cerevisiae (strain ATCC 204508 / S288c) (Baker's yeast).